A 382-amino-acid chain; its full sequence is Alkanesulfonate monooxygenase (382 aa).

Belongs to the SsuD family.

The enzyme catalyses an alkanesulfonate + FMNH2 + O2 = an aldehyde + FMN + sulfite + H2O + 2 H(+). Catalyzes the desulfonation of aliphatic sulfonates. The chain is Alkanesulfonate monooxygenase from Pseudomonas entomophila (strain L48).